Reading from the N-terminus, the 754-residue chain is Subtilisin-like protease SBT3.12 (754 aa).

Positions 1–28 (MGIVKGRSRAGLFIGFLFIVNVGFCVFA) are cleaved as a signal peptide. A propeptide spans 29–117 (QESSNEERKI…VAPNRKVELQ (89 aa)) (activation peptide). One can recognise an Inhibitor I9 domain in the interval 39-116 (YVVHLGVRRH…SVAPNRKVEL (78 aa)). Positions 121–606 (IYDYLGLSPS…AGLVNAERAK (486 aa)) constitute a Peptidase S8 domain. Residue aspartate 151 is the Charge relay system of the active site. A glycan (N-linked (GlcNAc...) asparagine) is linked at asparagine 206. Catalysis depends on histidine 224, which acts as the Charge relay system. Asparagine 239 and asparagine 369 each carry an N-linked (GlcNAc...) asparagine glycan. Serine 537 (charge relay system) is an active-site residue. Residues asparagine 629 and asparagine 740 are each glycosylated (N-linked (GlcNAc...) asparagine).

This sequence belongs to the peptidase S8 family.

The protein resides in the secreted. The chain is Subtilisin-like protease SBT3.12 from Arabidopsis thaliana (Mouse-ear cress).